We begin with the raw amino-acid sequence, 273 residues long: Dermonecrotic toxin (273 aa).

Residues Glu20 and Asp22 each coordinate Mg(2+). The active-site Nucleophile is the His35. A disulfide bridge connects residues Cys39 and Cys45. Asp79 is a binding site for Mg(2+).

The protein belongs to the arthropod phospholipase D family. Class I subfamily. It depends on Mg(2+) as a cofactor. As to expression, expressed by the venom gland.

The protein localises to the secreted. The catalysed reaction is an N-(acyl)-sphingosylphosphocholine = an N-(acyl)-sphingosyl-1,3-cyclic phosphate + choline. It catalyses the reaction an N-(acyl)-sphingosylphosphoethanolamine = an N-(acyl)-sphingosyl-1,3-cyclic phosphate + ethanolamine. The enzyme catalyses a 1-acyl-sn-glycero-3-phosphocholine = a 1-acyl-sn-glycero-2,3-cyclic phosphate + choline. It carries out the reaction a 1-acyl-sn-glycero-3-phosphoethanolamine = a 1-acyl-sn-glycero-2,3-cyclic phosphate + ethanolamine. Dermonecrotic toxins cleave the phosphodiester linkage between the phosphate and headgroup of certain phospholipids (sphingolipid and lysolipid substrates), forming an alcohol (often choline) and a cyclic phosphate. This toxin acts on sphingomyelin (SM). It may also act on ceramide phosphoethanolamine (CPE), lysophosphatidylcholine (LPC) and lysophosphatidylethanolamine (LPE), but not on lysophosphatidylserine (LPS), and lysophosphatidylglycerol (LPG). It acts by transphosphatidylation, releasing exclusively cyclic phosphate products as second products. Induces dermonecrosis, hemolysis, increased vascular permeability, edema, inflammatory response, and platelet aggregation. The sequence is that of Dermonecrotic toxin from Loxosceles laeta (South American recluse spider).